We begin with the raw amino-acid sequence, 211 residues long: MNSNVENLPPHVIRQVYKEVSTLTPDPPEGIKIIPNEEDITDVQVSIEGPEGTPYAGGIFRMKLILGKDFPAAPPKGYFLTKIFHPNVSSNGEICVNVLKKDWKAELGIRHVLLTIKCLLIHPNPESALNEEAGRLLLENYEEYASRARLMTEIHAHSSSLRGKDPTDPCSSASVTGALGDGPMAKKHAGDRDKKLAAKKKTDKKRALRRL.

The 147-residue stretch at 11-157 (HVIRQVYKEV…ARLMTEIHAH (147 aa)) folds into the UBC core domain. The Glycyl thioester intermediate role is filled by Cys95. Positions 157–167 (HSSSLRGKDPT) are enriched in basic and acidic residues. Residues 157-211 (HSSSLRGKDPTDPCSSASVTGALGDGPMAKKHAGDRDKKLAAKKKTDKKRALRRL) form a disordered region. Basic residues predominate over residues 197 to 211 (AAKKKTDKKRALRRL).

This sequence belongs to the ubiquitin-conjugating enzyme family.

The enzyme catalyses S-ubiquitinyl-[E1 ubiquitin-activating enzyme]-L-cysteine + [E2 ubiquitin-conjugating enzyme]-L-cysteine = [E1 ubiquitin-activating enzyme]-L-cysteine + S-ubiquitinyl-[E2 ubiquitin-conjugating enzyme]-L-cysteine.. The protein operates within protein modification; protein ubiquitination. Catalyzes the covalent attachment of ubiquitin to other proteins. Acts as an essential factor of the anaphase promoting complex/cyclosome (APC/C), a cell cycle-regulated ubiquitin ligase that controls progression through mitosis. Acts by specifically elongating 'Lys-11'-linked polyubiquitin chains initiated by the E2 enzyme ube2c/ubch10 on APC/C substrates, enhancing the degradation of APC/C substrates by the proteasome and promoting mitotic exit. The protein is Ubiquitin-conjugating enzyme E2 S (ube2s) of Aquarana catesbeiana (American bullfrog).